Reading from the N-terminus, the 843-residue chain is Taste receptor type 1 member 2 (843 aa).

A signal peptide spans 1–19 (MGPQARTLCLLSLLLHVLP). The Extracellular portion of the chain corresponds to 20 to 570 (KPGKLVENSD…TFLEWHEVPT (551 aa)). N-linked (GlcNAc...) asparagine glycosylation is found at Asn-87, Asn-296, Asn-316, Asn-355, Asn-372, Asn-432, Asn-484, Asn-491, and Asn-531. Residues 571-591 (IVVAILAALGFFSTLAILFIF) traverse the membrane as a helical segment. Residues 592–606 (WRHFQTPMVRSAGGP) lie on the Cytoplasmic side of the membrane. A helical transmembrane segment spans residues 607 to 627 (MCFLMLVPLLLAFGMVPVYVG). Topologically, residues 628–642 (PPTVFSCFCRQAFFT) are extracellular. The helical transmembrane segment at 643-663 (VCFSICLSCITVRSFQIVCVF) threads the bilayer. Over 664 to 682 (KMARRLPSAYSFWMRYHGP) the chain is Cytoplasmic. Residues 683–703 (YVFVAFITAIKVALVVGNMLA) traverse the membrane as a helical segment. Over 704–731 (TTINPIGRTDPDDPNIMILSCHPNYRNG) the chain is Extracellular. The helical transmembrane segment at 732-752 (LLFNTSMDLLLSVLGFSFAYM) threads the bilayer. Residues 753 to 764 (GKELPTNYNEAK) lie on the Cytoplasmic side of the membrane. A helical transmembrane segment spans residues 765 to 785 (FITLSMTFSFTSSISLCTFMS). At 786–789 (VHDG) the chain is on the extracellular side. Residues 790–810 (VLVTIMDLLVTVLNFLAIGLG) form a helical membrane-spanning segment. The Cytoplasmic segment spans residues 811–843 (YFGPKCYMILFYPERNTSAYFNSMIQGYTMRKS).

It belongs to the G-protein coupled receptor 3 family. TAS1R subfamily. In terms of assembly, forms heterodimers with TAS1R3. Abundantly expressed in circumvallate and foliate papillae.

Its subcellular location is the cell membrane. Putative taste receptor. TAS1R2/TAS1R3 recognizes diverse natural and synthetic sweeteners. This chain is Taste receptor type 1 member 2 (Tas1r2), found in Rattus norvegicus (Rat).